The primary structure comprises 738 residues: Translation initiation factor IF-2 (738 aa).

A compositionally biased stretch (polar residues) spans 1–10; the sequence is MNSMRISGHQ. The disordered stretch occupies residues 1–150; sequence MNSMRISGHQ…PTTVRAPVRP (150 aa). The span at 22-102 shows a compositional bias: gly residues; the sequence is AGGGRGPGNP…GGRGPSGGRG (81 aa). Basic and acidic residues predominate over residues 103 to 120; the sequence is GDGRRREESPTDHEDGRI. Low complexity predominate over residues 121-143; sequence NRSGRSTSTTTTRTSSTLARPTT. In terms of domain architecture, tr-type G spans 238–405; it reads PRPPVVTIMG…MILLVADLNE (168 aa). The tract at residues 247-254 is G1; the sequence is GHVDHGKT. Residue 247–254 participates in GTP binding; that stretch reads GHVDHGKT. The interval 272-276 is G2; sequence GITQH. Residues 293-296 form a G3 region; the sequence is DTPG. GTP-binding positions include 293–297 and 347–350; these read DTPGH and NKID. A G4 region spans residues 347–350; it reads NKID. The segment at 383 to 385 is G5; that stretch reads SAK.

The protein belongs to the TRAFAC class translation factor GTPase superfamily. Classic translation factor GTPase family. IF-2 subfamily.

It localises to the cytoplasm. Its function is as follows. One of the essential components for the initiation of protein synthesis. Protects formylmethionyl-tRNA from spontaneous hydrolysis and promotes its binding to the 30S ribosomal subunits. Also involved in the hydrolysis of GTP during the formation of the 70S ribosomal complex. The chain is Translation initiation factor IF-2 from Roseiflexus castenholzii (strain DSM 13941 / HLO8).